Consider the following 414-residue polypeptide: tRNA(Ile)-lysidine synthase (414 aa).

S13–S18 contacts ATP.

This sequence belongs to the tRNA(Ile)-lysidine synthase family.

It localises to the cytoplasm. The enzyme catalyses cytidine(34) in tRNA(Ile2) + L-lysine + ATP = lysidine(34) in tRNA(Ile2) + AMP + diphosphate + H(+). Its function is as follows. Ligates lysine onto the cytidine present at position 34 of the AUA codon-specific tRNA(Ile) that contains the anticodon CAU, in an ATP-dependent manner. Cytidine is converted to lysidine, thus changing the amino acid specificity of the tRNA from methionine to isoleucine. The sequence is that of tRNA(Ile)-lysidine synthase from Thermotoga sp. (strain RQ2).